The following is a 120-amino-acid chain: Glycine cleavage system H protein (120 aa).

The Lipoyl-binding domain maps to 17–99; the sequence is VATVGITNYA…QGAGWFFKLK (83 aa). Lys-58 carries the post-translational modification N6-lipoyllysine.

It belongs to the GcvH family. In terms of assembly, the glycine cleavage system is composed of four proteins: P, T, L and H. The cofactor is (R)-lipoate.

The glycine cleavage system catalyzes the degradation of glycine. The H protein shuttles the methylamine group of glycine from the P protein to the T protein. This is Glycine cleavage system H protein from Rhizobium leguminosarum bv. trifolii (strain WSM2304).